Reading from the N-terminus, the 522-residue chain is Protein nucleotidyltransferase YdiU (522 aa).

The ATP site is built by glycine 109, glycine 111, arginine 112, lysine 132, aspartate 144, glycine 145, arginine 195, and arginine 202. The Proton acceptor role is filled by aspartate 271. Asparagine 272 and aspartate 281 together coordinate Mg(2+). Position 281 (aspartate 281) interacts with ATP.

This sequence belongs to the SELO family. Mg(2+) serves as cofactor. Requires Mn(2+) as cofactor.

The enzyme catalyses L-seryl-[protein] + ATP = 3-O-(5'-adenylyl)-L-seryl-[protein] + diphosphate. It carries out the reaction L-threonyl-[protein] + ATP = 3-O-(5'-adenylyl)-L-threonyl-[protein] + diphosphate. The catalysed reaction is L-tyrosyl-[protein] + ATP = O-(5'-adenylyl)-L-tyrosyl-[protein] + diphosphate. It catalyses the reaction L-histidyl-[protein] + UTP = N(tele)-(5'-uridylyl)-L-histidyl-[protein] + diphosphate. The enzyme catalyses L-seryl-[protein] + UTP = O-(5'-uridylyl)-L-seryl-[protein] + diphosphate. It carries out the reaction L-tyrosyl-[protein] + UTP = O-(5'-uridylyl)-L-tyrosyl-[protein] + diphosphate. Functionally, nucleotidyltransferase involved in the post-translational modification of proteins. It can catalyze the addition of adenosine monophosphate (AMP) or uridine monophosphate (UMP) to a protein, resulting in modifications known as AMPylation and UMPylation. In Burkholderia multivorans (strain ATCC 17616 / 249), this protein is Protein nucleotidyltransferase YdiU.